Consider the following 1228-residue polypeptide: Calcium-transporting ATPase (1228 aa).

Residues 1-63 (MEEVIKNAHT…FELILNQFDD (63 aa)) lie on the Cytoplasmic side of the membrane. The chain crosses the membrane as a helical span at residues 64–81 (LLVKILLLAAFISFVLTL). The Extracellular portion of the chain corresponds to 82 to 92 (LDMKHKKIEIC). The helical transmembrane segment at 93–112 (DFIEPLVIVLILILNAAVGV) threads the bilayer. At 113–270 (WQECNAEKSL…IDLFGQQLSK (158 aa)) the chain is on the cytoplasmic side. The helical transmembrane segment at 271-291 (IIFVICVTVWIINFKHFSDPI) threads the bilayer. Residues 292–300 (HGSFLYGCL) are Extracellular-facing. Residues 301 to 321 (YYFKISVALAVAAIPEGLPAV) form a helical membrane-spanning segment. At 322-974 (ITTCLALGTR…IYNNMKAFIR (653 aa)) the chain is on the cytoplasmic side. Catalysis depends on Asp358, which acts as the 4-aspartylphosphate intermediate. 2 disordered regions span residues 452–478 (MKNDLNNNNNNNNNSSRSGAKRNIPLK) and 562–613 (MPAE…LKNA). Positions 589–604 (FFSSKNDNSHITSTLN) are enriched in polar residues. Position 716 (Lys716) interacts with ATP. Residues 975–994 (YLISSNIGEVASIFITALLG) form a helical membrane-spanning segment. The Extracellular portion of the chain corresponds to 995–1000 (IPDSLA). The helical transmembrane segment at 1001 to 1021 (PVQLLWVNLVTDGLPATALGF) threads the bilayer. The Cytoplasmic segment spans residues 1022–1042 (NPPEHDVMKCKPRHKNDNLIN). The helical transmembrane segment at 1043–1067 (GLTLLRYIIIGTYVGIATVSIFVYW) threads the bilayer. Over 1068–1118 (FLFYPDSDMHTLINFYQLSHYNQCKAWNNFRVNKVYDMSEDHCSYFSAGKI) the chain is Extracellular. Residues 1119–1140 (KASTLSLSVLVLIEMFNALNAL) form a helical membrane-spanning segment. Residues 1141-1151 (SEYNSLFEIPP) lie on the Cytoplasmic side of the membrane. The helical transmembrane segment at 1152–1172 (WRNMYLVLATIGSLLLHVLIL) threads the bilayer. At 1173-1185 (YIPPLARIFGVVP) the chain is on the extracellular side. A helical membrane pass occupies residues 1186–1206 (LSAYDWFLVFLWSFPVIILDE). Topologically, residues 1207–1228 (IIKFYAKRKLKEEQRTKKIKID) are cytoplasmic.

Belongs to the cation transport ATPase (P-type) (TC 3.A.3) family.

The protein localises to the membrane. The catalysed reaction is Ca(2+)(in) + ATP + H2O = Ca(2+)(out) + ADP + phosphate + H(+). Functionally, this magnesium-dependent enzyme catalyzes the hydrolysis of ATP coupled with the transport of the calcium. The polypeptide is Calcium-transporting ATPase (ATP6) (Plasmodium falciparum (isolate K1 / Thailand)).